Reading from the N-terminus, the 384-residue chain is Histidinol-phosphate aminotransferase 2 (384 aa).

Position 236 is an N6-(pyridoxal phosphate)lysine (Lys236).

The protein belongs to the class-II pyridoxal-phosphate-dependent aminotransferase family. Histidinol-phosphate aminotransferase subfamily. As to quaternary structure, homodimer. It depends on pyridoxal 5'-phosphate as a cofactor.

It catalyses the reaction L-histidinol phosphate + 2-oxoglutarate = 3-(imidazol-4-yl)-2-oxopropyl phosphate + L-glutamate. It functions in the pathway amino-acid biosynthesis; L-histidine biosynthesis; L-histidine from 5-phospho-alpha-D-ribose 1-diphosphate: step 7/9. This Nostoc sp. (strain PCC 7120 / SAG 25.82 / UTEX 2576) protein is Histidinol-phosphate aminotransferase 2 (hisC2).